Here is a 220-residue protein sequence, read N- to C-terminus: Putative NAD(P)H nitroreductase SERP2086 (220 aa).

Belongs to the nitroreductase family. It depends on FMN as a cofactor.

This is Putative NAD(P)H nitroreductase SERP2086 from Staphylococcus epidermidis (strain ATCC 35984 / DSM 28319 / BCRC 17069 / CCUG 31568 / BM 3577 / RP62A).